Here is a 430-residue protein sequence, read N- to C-terminus: T-kininogen 2 (430 aa).

Residues 1–18 (MKLITILLLCSRLLPSLA) form the signal peptide. Q19 carries the post-translational modification Pyrrolidone carboxylic acid. A Cystatin kininogen-type 1 domain is found at 28–131 (CNDETVFQAV…TQICNITPGK (104 aa)). Cystine bridges form between C28–C404, C83–C94, C107–C125, C141–C144, C205–C217, C228–C247, C263–C266, C327–C339, and C350–C369. N-linked (GlcNAc...) asparagine glycosylation occurs at N82. Positions 150 to 253 (MDSSDLKPVL…SQSCDLYPGD (104 aa)) constitute a Cystatin kininogen-type 2 domain. 2 N-linked (GlcNAc...) asparagine glycosylation sites follow: N168 and N204. In terms of domain architecture, Cystatin kininogen-type 3 spans 272-375 (VDSPELKEAL…TVRCQALDMM (104 aa)). N326 carries N-linked (GlcNAc...) asparagine glycosylation. Positions 410-430 (LSKAGAGPAPDHQAEASTVTP) are disordered.

In terms of processing, as T-kinin is preceded by a Met instead of an Arg or Lys, it is not released from its precursor by either tissue or plasma kallikrein. Plasma.

It is found in the secreted. It localises to the extracellular space. Kininogens are plasma glycoproteins with a number of functions: (1) as precursor of the active peptide bradykinin they effect smooth muscle contraction, induction of hypotension and increase of vascular permeability. (2) They play a role in blood coagulation by helping to position optimally prekallikrein and factor XI next to factor XII. (3) They are inhibitor of thiol proteases. In Rattus norvegicus (Rat), this protein is T-kininogen 2.